The sequence spans 335 residues: GTPase Obg (335 aa).

The Obg domain maps to 1 to 158 (MFLDQITIEL…RQVELELKLI (158 aa)). Residues 159–334 (ADIGLVGFPN…LNSLFTNRLS (176 aa)) enclose the OBG-type G domain. GTP is bound by residues 165–172 (GFPNAGKS), 190–194 (FTTLQ), 215–218 (DIPG), 285–288 (NKID), and 315–317 (SGL). The Mg(2+) site is built by serine 172 and threonine 192.

Belongs to the TRAFAC class OBG-HflX-like GTPase superfamily. OBG GTPase family. In terms of assembly, monomer. It depends on Mg(2+) as a cofactor.

The protein localises to the cytoplasm. Functionally, an essential GTPase which binds GTP, GDP and possibly (p)ppGpp with moderate affinity, with high nucleotide exchange rates and a fairly low GTP hydrolysis rate. Plays a role in control of the cell cycle, stress response, ribosome biogenesis and in those bacteria that undergo differentiation, in morphogenesis control. The protein is GTPase Obg of Chlamydia caviae (strain ATCC VR-813 / DSM 19441 / 03DC25 / GPIC) (Chlamydophila caviae).